The chain runs to 489 residues: Cytochrome P450 monooxygenase prhB (489 aa).

Transmembrane regions (helical) follow at residues 1 to 21 (MFSF…KVIY), 212 to 232 (VIFQ…MIFA), and 287 to 307 (LFIG…AYLL). N347 and N379 each carry an N-linked (GlcNAc...) asparagine glycan. C431 serves as a coordination point for heme.

This sequence belongs to the cytochrome P450 family. It depends on heme as a cofactor.

The protein localises to the membrane. Its pathway is secondary metabolite biosynthesis; terpenoid biosynthesis. In terms of biological role, cytochrome P450 monooxygenase; part of the gene cluster that mediates the biosynthesis of paraherquonin, a meroterpenoid with a unique, highly congested hexacyclic molecular architecture. The first step of the pathway is the synthesis of 3,5-dimethylorsellinic acid (DMOA) by the polyketide synthase prhL. Synthesis of DMOA is followed by farnesylation by the prenyltransferase prhE, methylesterification by the methyl-transferase prhM, epoxidation of the prenyl chain by the flavin-dependent monooxygenase prhF, and cyclization of the farnesyl moiety by the terpene cyclase prhH, to yield the tetracyclic intermediate, protoaustinoid A. The short chain dehydrogenase prhI then oxidizes the C-3 alcohol group of the terpene cyclase product to transform protoaustinoid A into protoaustinoid B. The FAD-binding monooxygenase prhJ catalyzes the oxidation of protoaustinoid B into preaustinoid A which is further oxidized into preaustinoid A1 by FAD-binding monooxygenase phrK. Finally, prhA leads to berkeleydione via the berkeleyone B intermediate. PrhA is a multifunctional dioxygenase that first desaturates at C5-C6 to form berkeleyone B, followed by rearrangement of the A/B-ring to form the cycloheptadiene moiety in berkeleydione. Berkeleydione serves as the key intermediate for the biosynthesis of paraherquonin as well as many other meroterpenoids. The cytochrome P450 monooxygenases prhB, prhD, and prhN, as well as the isomerase prhC, are probably involved in the late stage of paraherquonin biosynthesis, after the production of berkeleydione. Especially prhC might be a multifunctional enzyme that catalyzes the D-ring expansion via intramolecular methoxy rearrangement, as well as the hydrolysis of the expanded D-ring. This is Cytochrome P450 monooxygenase prhB from Penicillium brasilianum.